We begin with the raw amino-acid sequence, 207 residues long: MSLNYIKNFYEGCLRPPTVIGQFHTLFFGSVRTFFLGVLGFAVYGNEALHFSCDPDKRELNLYCYNQFRPITPQVFWALQLVTVLVPGAVFHLYAACKNIDQEEILHRPMSTVFYIISVLLRIILEVLAFWLQSHLFGFLVDPIFMCDVTGLGKILNVSKCMVPEHFEKTIFLSAMYTFTIITILLCIAEIFEILFRRLGYLNQPMT.

Residues Met1–Gln22 lie on the Cytoplasmic side of the membrane. Residues Phe23–Val43 traverse the membrane as a helical segment. Topologically, residues Tyr44 to Gln74 are extracellular. 2 cysteine pairs are disulfide-bonded: Cys53–Cys161 and Cys64–Cys147. The chain crosses the membrane as a helical span at residues Val75–Ala95. The Cytoplasmic portion of the chain corresponds to Ala96–Ser111. The helical transmembrane segment at Thr112–Leu132 threads the bilayer. Residues Gln133 to Ala175 are Extracellular-facing. Residues Met176–Phe196 traverse the membrane as a helical segment. The Cytoplasmic portion of the chain corresponds to Arg197–Thr207.

Belongs to the connexin family. Beta-type (group I) subfamily. In terms of assembly, a connexon is composed of a hexamer of connexins.

The protein resides in the cell membrane. Functionally, has significant hemichannel activity. However, has only low-efficiency gap junction activity and probably does not function as a gap junction channel in vivo. The polypeptide is Gap junction epsilon-1 protein (Danio rerio (Zebrafish)).